A 376-amino-acid polypeptide reads, in one-letter code: Protein-glutamate methylesterase/protein-glutamine glutaminase 1 (376 aa).

Residues 4-121 (KVLVVDDSSF…ARNRDEAVSL (118 aa)) enclose the Response regulatory domain. Aspartate 55 carries the post-translational modification 4-aspartylphosphate. Positions 138 to 174 (RPVASSTPVQERPQSTLNRPTTGLRREAPAQAPVSRA) are disordered. Residues 141–158 (ASSTPVQERPQSTLNRPT) show a composition bias toward polar residues. The 194-residue stretch at 183 to 376 (SGKKYQLTAI…ERMLVEVGLA (194 aa)) folds into the CheB-type methylesterase domain. Catalysis depends on residues serine 195, histidine 222, and aspartate 318.

The protein belongs to the CheB family. In terms of processing, phosphorylated by CheA. Phosphorylation of the N-terminal regulatory domain activates the methylesterase activity.

It is found in the cytoplasm. The enzyme catalyses [protein]-L-glutamate 5-O-methyl ester + H2O = L-glutamyl-[protein] + methanol + H(+). The catalysed reaction is L-glutaminyl-[protein] + H2O = L-glutamyl-[protein] + NH4(+). Its function is as follows. Involved in chemotaxis. Part of a chemotaxis signal transduction system that modulates chemotaxis in response to various stimuli. Catalyzes the demethylation of specific methylglutamate residues introduced into the chemoreceptors (methyl-accepting chemotaxis proteins or MCP) by CheR. Also mediates the irreversible deamidation of specific glutamine residues to glutamic acid. The sequence is that of Protein-glutamate methylesterase/protein-glutamine glutaminase 1 from Vibrio vulnificus (strain CMCP6).